The sequence spans 200 residues: Vacuolar iron transporter homolog 1 (200 aa).

Residues 1 to 34 (MESHNVSNSLNLDMEMDQEKAFDYSKRAQWLRAA) are Cytoplasmic-facing. The helical transmembrane segment at 35 to 55 (VLGANDGLVSTASLMMGVGAV) threads the bilayer. Residues 56-62 (KQDVKVM) lie on the Vacuolar side of the membrane. A helical transmembrane segment spans residues 63–83 (ILSGFAGLVAGACSMAIGEFV). At 84–116 (SVYSQYDIEVAQMKRENGGQVEKEKLPSPMQAA) the chain is on the cytoplasmic side. Residues 117 to 137 (AASALAFSLGAIVPLMAAAFV) form a helical membrane-spanning segment. The Vacuolar portion of the chain corresponds to 138–143 (KDYHVR). The chain crosses the membrane as a helical span at residues 144–164 (IGAIVAAVTLALVMFGWLGAV). Residues 165–176 (LGKAPVFKSSAR) are Cytoplasmic-facing. The chain crosses the membrane as a helical span at residues 177–197 (VLIGGWLAMAVTFGLTKLIGT). Residues 198–200 (HSL) lie on the Vacuolar side of the membrane.

Belongs to the CCC1 family. In terms of tissue distribution, expressed in the vascular bundles of the shoot and the stele of the root. Expressed in inflorescences and at lower levels in leaves.

The protein resides in the vacuole membrane. It catalyses the reaction Fe(2+)(in) = Fe(2+)(out). Functionally, vacuolar iron transporter involved in the transfer of iron ions from the cytosol to the vacuole for intracellular iron storage. Involved in regulation of cellular iron homeostasis. Vacuolar iron storage is required for seed embryo and seedling development. The polypeptide is Vacuolar iron transporter homolog 1 (Arabidopsis thaliana (Mouse-ear cress)).